Consider the following 160-residue polypeptide: Tumor suppressor ARF (160 aa).

The interaction with CDK5RAP3 and MDM2 stretch occupies residues 1 to 63 (MGRRFVVTVR…RRGPQPHPGP (63 aa)). Disordered stretches follow at residues 49–74 (PERIARRGPQPHPGPGDDDGQRQSGS) and 90–116 (HPLPTGARRSAGGLPRHSGSTAPGRGA).

As to quaternary structure, does not interact with cyclins, CDK1, CDK2, CDK4, CDK5 or CDK6. Binds to BCL6, E2F1, HUWE1, MDM2, MYC, NPM1/B23, TOP1/TOPOI and UBE2I/UBC9. Interacts with TBRG1 and COMMD1. Interacts with CDKN2AIP and E4F1. Interacts with CDK5RAP3 and MDM2; form a ternary complex involved in regulation of p53/TP53. Interacts with NOP53; the interaction is direct and promotes ARF nucleoplasmic relocalization and ubiquitin-mediated proteasomal degradation. Interacts with TTF1 (via the N-terminal region (NRD) and a C-terminal region); the interaction is direct and inhibits the nucleolar localization of TTF1. In terms of processing, ubiquitinated in normal cells by TRIP12 via the ubiquitin fusion degradation (UFD) pathway, a process that mediates ubiquitination at the N-terminus, regardless of the absence of lysine residues. Ubiquitination leads to its proteasomal degradation. In cancer cells, however, TRIP12 is located in a different cell compartment, preventing ubiquitination and degradation. As to expression, widely expressed with very low levels in kidney and colon.

It is found in the nucleus. Its subcellular location is the nucleolus. It localises to the nucleoplasm. In terms of biological role, capable of inducing cell cycle arrest in G1 and G2 phases. Acts as a tumor suppressor. Binds to MDM2 and blocks its nucleocytoplasmic shuttling by sequestering it in the nucleolus. This inhibits the oncogenic action of MDM2 by blocking MDM2-induced degradation of p53 and enhancing p53-dependent transactivation and apoptosis. Also induces G2 arrest and apoptosis in a p53-independent manner by preventing the activation of cyclin B1/CDC2 complexes. Binds to BCL6 and down-regulates BCL6-induced transcriptional repression. Binds to E2F1 and MYC and blocks their transcriptional activator activity but has no effect on MYC transcriptional repression. Binds to TOP1/TOPOI and stimulates its activity. This complex binds to rRNA gene promoters and may play a role in rRNA transcription and/or maturation. Interacts with NPM1/B23 and promotes its polyubiquitination and degradation, thus inhibiting rRNA processing. Plays a role in inhibiting ribosome biogenesis, perhaps by binding to the nucleolar localization sequence of transcription termination factor TTF1, and thereby preventing nucleolar localization of TTF1. Interacts with COMMD1 and promotes its 'Lys63'-linked polyubiquitination. Interacts with UBE2I/UBC9 and enhances sumoylation of a number of its binding partners including MDM2 and E2F1. Binds to HUWE1 and represses its ubiquitin ligase activity. May play a role in controlling cell proliferation and apoptosis during mammary gland development. This is Tumor suppressor ARF from Rattus norvegicus (Rat).